Consider the following 957-residue polypeptide: Glycine dehydrogenase (decarboxylating) (957 aa).

N6-(pyridoxal phosphate)lysine is present on K702.

This sequence belongs to the GcvP family. The glycine cleavage system is composed of four proteins: P, T, L and H. Requires pyridoxal 5'-phosphate as cofactor.

The catalysed reaction is N(6)-[(R)-lipoyl]-L-lysyl-[glycine-cleavage complex H protein] + glycine + H(+) = N(6)-[(R)-S(8)-aminomethyldihydrolipoyl]-L-lysyl-[glycine-cleavage complex H protein] + CO2. In terms of biological role, the glycine cleavage system catalyzes the degradation of glycine. The P protein binds the alpha-amino group of glycine through its pyridoxal phosphate cofactor; CO(2) is released and the remaining methylamine moiety is then transferred to the lipoamide cofactor of the H protein. This chain is Glycine dehydrogenase (decarboxylating), found in Bradyrhizobium sp. (strain BTAi1 / ATCC BAA-1182).